A 178-amino-acid polypeptide reads, in one-letter code: uncharacterized protein (178 aa).

The 165-residue stretch at 9–173 (LTLRKMELED…IDVYMFSLLK (165 aa)) folds into the N-acetyltransferase domain.

This is an uncharacterized protein from Bacillus licheniformis.